A 376-amino-acid chain; its full sequence is N-acetyldiaminopimelate deacetylase (376 aa).

Asp69 is an active-site residue. Glu128 functions as the Proton acceptor in the catalytic mechanism.

Belongs to the peptidase M20A family. N-acetyldiaminopimelate deacetylase subfamily.

The catalysed reaction is N-acetyl-(2S,6S)-2,6-diaminopimelate + H2O = (2S,6S)-2,6-diaminopimelate + acetate. The protein operates within amino-acid biosynthesis; L-lysine biosynthesis via DAP pathway; LL-2,6-diaminopimelate from (S)-tetrahydrodipicolinate (acetylase route): step 3/3. Catalyzes the conversion of N-acetyl-diaminopimelate to diaminopimelate and acetate. The polypeptide is N-acetyldiaminopimelate deacetylase (Streptococcus pneumoniae (strain Hungary19A-6)).